The chain runs to 1091 residues: Protein JSN1 (1091 aa).

2 disordered regions span residues 31–51 (EYEN…KLGS) and 75–131 (HHSK…GSLT). Residues 99-111 (TVASKTPRASPSR) are compositionally biased toward polar residues. Phosphoserine is present on serine 129. Threonine 131 bears the Phosphothreonine mark. Phosphoserine is present on residues serine 160 and serine 168. Positions 340 to 426 (NTISISNVFP…APSKISFAKI (87 aa)) constitute an RRM domain. Low complexity-rich tracts occupy residues 482–494 (QQSQ…NHSS) and 507–520 (NNNN…NNSA). Disordered regions lie at residues 482 to 534 (QQSQ…PPPN) and 568 to 591 (HKGT…EFDP). In terms of domain architecture, PUM-HD spans 557 to 913 (QINSLIKKSL…RLLEEVGLAS (357 aa)). Polar residues predominate over residues 568 to 577 (HKGTSDTQNF). Pumilio repeat units lie at residues 617–652 (AMLD…IMLR), 653–689 (KTSK…QVTQ), 690–724 (GVKD…FIFE), 725–760 (SIIA…QSIV), and 801–837 (RLTK…IILD). Residues 911-981 (LASPSSTHNK…GSSASTLSPG (71 aa)) are disordered. Phosphoserine is present on serine 913. Low complexity-rich tracts occupy residues 915–935 (SSTH…SISH) and 951–979 (SVSS…STLS).

The chain is Protein JSN1 (JSN1) from Saccharomyces cerevisiae (strain ATCC 204508 / S288c) (Baker's yeast).